We begin with the raw amino-acid sequence, 130 residues long: Small ribosomal subunit protein uS11 (130 aa).

This sequence belongs to the universal ribosomal protein uS11 family. As to quaternary structure, part of the 30S ribosomal subunit. Interacts with proteins S7 and S18. Binds to IF-3.

In terms of biological role, located on the platform of the 30S subunit, it bridges several disparate RNA helices of the 16S rRNA. Forms part of the Shine-Dalgarno cleft in the 70S ribosome. The protein is Small ribosomal subunit protein uS11 of Lactobacillus helveticus (strain DPC 4571).